The following is a 291-amino-acid chain: ATP synthase subunit b 2 (291 aa).

The chain crosses the membrane as a helical span at residues 2 to 22 (LIDGFTVVAQIVNFLILVWLL).

Belongs to the ATPase B chain family. In terms of assembly, F-type ATPases have 2 components, F(1) - the catalytic core - and F(0) - the membrane proton channel. F(1) has five subunits: alpha(3), beta(3), gamma(1), delta(1), epsilon(1). F(0) has three main subunits: a(1), b(2) and c(10-14). The alpha and beta chains form an alternating ring which encloses part of the gamma chain. F(1) is attached to F(0) by a central stalk formed by the gamma and epsilon chains, while a peripheral stalk is formed by the delta and b chains.

The protein localises to the cell inner membrane. Functionally, f(1)F(0) ATP synthase produces ATP from ADP in the presence of a proton or sodium gradient. F-type ATPases consist of two structural domains, F(1) containing the extramembraneous catalytic core and F(0) containing the membrane proton channel, linked together by a central stalk and a peripheral stalk. During catalysis, ATP synthesis in the catalytic domain of F(1) is coupled via a rotary mechanism of the central stalk subunits to proton translocation. In terms of biological role, component of the F(0) channel, it forms part of the peripheral stalk, linking F(1) to F(0). The chain is ATP synthase subunit b 2 from Nitrosospira multiformis (strain ATCC 25196 / NCIMB 11849 / C 71).